A 241-amino-acid polypeptide reads, in one-letter code: DNA repair protein RecO (241 aa).

The protein belongs to the RecO family.

Functionally, involved in DNA repair and RecF pathway recombination. This Orientia tsutsugamushi (strain Ikeda) (Rickettsia tsutsugamushi) protein is DNA repair protein RecO.